The following is a 444-amino-acid chain: Phosphoglucosamine mutase (444 aa).

The active-site Phosphoserine intermediate is Ser102. Ser102, Asp241, Asp243, and Asp245 together coordinate Mg(2+). Phosphoserine is present on Ser102.

The protein belongs to the phosphohexose mutase family. It depends on Mg(2+) as a cofactor. In terms of processing, activated by phosphorylation.

The enzyme catalyses alpha-D-glucosamine 1-phosphate = D-glucosamine 6-phosphate. In terms of biological role, catalyzes the conversion of glucosamine-6-phosphate to glucosamine-1-phosphate. The chain is Phosphoglucosamine mutase from Paracidovorax citrulli (strain AAC00-1) (Acidovorax citrulli).